The primary structure comprises 206 residues: Histidine biosynthesis bifunctional protein HisIE (206 aa).

Residues 1–117 form a phosphoribosyl-AMP cyclohydrolase region; sequence MCNEPATSDV…SCFPAAPGQF (117 aa). Positions 118 to 206 are phosphoribosyl-ATP pyrophosphohydrolase; that stretch reads LGALDALVAE…AVTVLEARHR (89 aa).

In the N-terminal section; belongs to the PRA-CH family. The protein in the C-terminal section; belongs to the PRA-PH family.

Its subcellular location is the cytoplasm. It carries out the reaction 1-(5-phospho-beta-D-ribosyl)-ATP + H2O = 1-(5-phospho-beta-D-ribosyl)-5'-AMP + diphosphate + H(+). The catalysed reaction is 1-(5-phospho-beta-D-ribosyl)-5'-AMP + H2O = 1-(5-phospho-beta-D-ribosyl)-5-[(5-phospho-beta-D-ribosylamino)methylideneamino]imidazole-4-carboxamide. Its pathway is amino-acid biosynthesis; L-histidine biosynthesis; L-histidine from 5-phospho-alpha-D-ribose 1-diphosphate: step 2/9. It participates in amino-acid biosynthesis; L-histidine biosynthesis; L-histidine from 5-phospho-alpha-D-ribose 1-diphosphate: step 3/9. This Xylella fastidiosa (strain 9a5c) protein is Histidine biosynthesis bifunctional protein HisIE (hisI).